The following is a 199-amino-acid chain: GTP-binding protein Di-Ras2 (199 aa).

GTP is bound by residues 14-21 (GAGGVGKS), 33-39 (RESYIPT), 61-65 (DTTGS), and 121-124 (NKCD). At S35 the chain carries Phosphoserine. The Effector region signature appears at 36–44 (YIPTVEDTY). S126 is modified (phosphoserine). 152-153 (AK) contributes to the GTP binding site. The residue at position 196 (C196) is a Cysteine methyl ester. C196 is lipidated: S-geranylgeranyl cysteine. Residues 197–199 (VVM) constitute a propeptide, removed in mature form.

It belongs to the small GTPase superfamily. Di-Ras family. Ubiquitinated by the ECS(ASB11) complex via 'Lys-11'-linked ubiquitin chains, leading to its degradation by the proteasome.

It is found in the cell membrane. It catalyses the reaction GTP + H2O = GDP + phosphate + H(+). Its function is as follows. Displays low GTPase activity and exists predominantly in the GTP-bound form. This Mus musculus (Mouse) protein is GTP-binding protein Di-Ras2 (Diras2).